We begin with the raw amino-acid sequence, 225 residues long: ATP-dependent dethiobiotin synthetase BioD (225 aa).

Glu-12 to Tyr-17 contributes to the ATP binding site. Thr-16 contributes to the Mg(2+) binding site. Residue Lys-37 is part of the active site. Ser-41 serves as a coordination point for substrate. Residues Asp-52, Glu-114–Gly-117, and Asn-174–Cys-175 each bind ATP. Positions 52 and 114 each coordinate Mg(2+).

This sequence belongs to the dethiobiotin synthetase family. As to quaternary structure, homodimer. Mg(2+) is required as a cofactor.

Its subcellular location is the cytoplasm. The enzyme catalyses (7R,8S)-7,8-diammoniononanoate + CO2 + ATP = (4R,5S)-dethiobiotin + ADP + phosphate + 3 H(+). It functions in the pathway cofactor biosynthesis; biotin biosynthesis; biotin from 7,8-diaminononanoate: step 1/2. Functionally, catalyzes a mechanistically unusual reaction, the ATP-dependent insertion of CO2 between the N7 and N8 nitrogen atoms of 7,8-diaminopelargonic acid (DAPA, also called 7,8-diammoniononanoate) to form a ureido ring. The protein is ATP-dependent dethiobiotin synthetase BioD of Francisella tularensis subsp. novicida (strain U112).